The following is a 104-amino-acid chain: Large ribosomal subunit protein uL24 (104 aa).

This sequence belongs to the universal ribosomal protein uL24 family. Part of the 50S ribosomal subunit.

Functionally, one of two assembly initiator proteins, it binds directly to the 5'-end of the 23S rRNA, where it nucleates assembly of the 50S subunit. In terms of biological role, one of the proteins that surrounds the polypeptide exit tunnel on the outside of the subunit. The polypeptide is Large ribosomal subunit protein uL24 (Shewanella amazonensis (strain ATCC BAA-1098 / SB2B)).